We begin with the raw amino-acid sequence, 123 residues long: Putative C-type lectin protein FPV003/FPV258 (123 aa).

The region spanning 21 to 122 (CRGPYTSYNN…CNATYGFVCI (102 aa)) is the C-type lectin domain.

The protein is Putative C-type lectin protein FPV003/FPV258 of Fowlpox virus (strain NVSL) (FPV).